Consider the following 282-residue polypeptide: Release factor glutamine methyltransferase (282 aa).

3 residues coordinate S-adenosyl-L-methionine: D141, F169, and N186. 186 to 189 serves as a coordination point for substrate; that stretch reads NPPY.

Belongs to the protein N5-glutamine methyltransferase family. PrmC subfamily.

The catalysed reaction is L-glutaminyl-[peptide chain release factor] + S-adenosyl-L-methionine = N(5)-methyl-L-glutaminyl-[peptide chain release factor] + S-adenosyl-L-homocysteine + H(+). Its function is as follows. Methylates the class 1 translation termination release factors RF1/PrfA and RF2/PrfB on the glutamine residue of the universally conserved GGQ motif. This chain is Release factor glutamine methyltransferase, found in Mycoplasma mycoides subsp. mycoides SC (strain CCUG 32753 / NCTC 10114 / PG1).